The primary structure comprises 67 residues: uncharacterized protein (67 aa).

A helical transmembrane segment spans residues 12–34 (YYYAHQTVCITSTGFALCFVVQA).

The protein localises to the membrane. This is an uncharacterized protein from Saccharomyces cerevisiae (strain ATCC 204508 / S288c) (Baker's yeast).